The primary structure comprises 241 residues: Carboxy-S-adenosyl-L-methionine synthase (241 aa).

Residues Tyr38, 63–65 (GCS), 88–89 (DN), 116–117 (DI), Asn131, and Arg198 contribute to the S-adenosyl-L-methionine site.

Belongs to the class I-like SAM-binding methyltransferase superfamily. Cx-SAM synthase family. In terms of assembly, homodimer.

It catalyses the reaction prephenate + S-adenosyl-L-methionine = carboxy-S-adenosyl-L-methionine + 3-phenylpyruvate + H2O. Its function is as follows. Catalyzes the conversion of S-adenosyl-L-methionine (SAM) to carboxy-S-adenosyl-L-methionine (Cx-SAM). This is Carboxy-S-adenosyl-L-methionine synthase from Mannheimia succiniciproducens (strain KCTC 0769BP / MBEL55E).